A 599-amino-acid chain; its full sequence is Elongation factor 4 (599 aa).

Residues 2 to 184 (KNIRNFSIIA…RLVRDIPPPE (183 aa)) enclose the tr-type G domain. Residues 14 to 19 (DHGKST) and 131 to 134 (NKID) contribute to the GTP site.

The protein belongs to the TRAFAC class translation factor GTPase superfamily. Classic translation factor GTPase family. LepA subfamily.

It localises to the cell inner membrane. The enzyme catalyses GTP + H2O = GDP + phosphate + H(+). Required for accurate and efficient protein synthesis under certain stress conditions. May act as a fidelity factor of the translation reaction, by catalyzing a one-codon backward translocation of tRNAs on improperly translocated ribosomes. Back-translocation proceeds from a post-translocation (POST) complex to a pre-translocation (PRE) complex, thus giving elongation factor G a second chance to translocate the tRNAs correctly. Binds to ribosomes in a GTP-dependent manner. This chain is Elongation factor 4, found in Klebsiella pneumoniae subsp. pneumoniae (strain ATCC 700721 / MGH 78578).